Here is a 609-residue protein sequence, read N- to C-terminus: UvrABC system protein C (609 aa).

Positions 16–94 (SSPGVYRMYD…IKQYMPKYNV (79 aa)) constitute a GIY-YIG domain. A UVR domain is found at 203 to 238 (QQVTKALVAKMEQAAVELNYEQAARYRDQITALRRV).

This sequence belongs to the UvrC family. In terms of assembly, interacts with UvrB in an incision complex.

It is found in the cytoplasm. The UvrABC repair system catalyzes the recognition and processing of DNA lesions. UvrC both incises the 5' and 3' sides of the lesion. The N-terminal half is responsible for the 3' incision and the C-terminal half is responsible for the 5' incision. This Shewanella piezotolerans (strain WP3 / JCM 13877) protein is UvrABC system protein C.